A 432-amino-acid chain; its full sequence is MKRNTIDIITLGCSKNLVDSEKLMRQLEANGYKVTHDSDKPQGEIAVINTCGFIGDAKEESINMILEFCQAKEEGKLKKLYVMGCLSERYLKELALEIPQVDKFYGKFNWNELLADLGKAYKSEFAIERTLTTPHHYAYLKISEGCDRKCSYCAIPIITGRHISRPMEEIIDEVKLLVSEGVKEFQIIAQELTYYGVDLYKSQKLPELIERIANVPGVEWIRLHYAYPAHFPEELFRVMREHDNVCKYMDIALQHISDNMLNKMRRHVSKAETYELIEKFRREVPGIHLRTTLMVGHPGETEEDFEELKEFVKKVRFDRMGAFAYSEEEGTFAAKEYEDSISHEVKQQRLDELMALQQEIAGELSQTKIGKEFKVIIDRKEGDYYIGRTQFDSPEVDPEVLIKADEEYLKIGEFYKVKITAADDFDLYASIL.

The region spanning 4–122 is the MTTase N-terminal domain; the sequence is NTIDIITLGC…LLADLGKAYK (119 aa). The [4Fe-4S] cluster site is built by cysteine 13, cysteine 51, cysteine 85, cysteine 146, cysteine 150, and cysteine 153. One can recognise a Radical SAM core domain in the interval 132–363; it reads TTPHHYAYLK…MALQQEIAGE (232 aa). One can recognise a TRAM domain in the interval 366–432; the sequence is QTKIGKEFKV…DDFDLYASIL (67 aa).

This sequence belongs to the methylthiotransferase family. RimO subfamily. The cofactor is [4Fe-4S] cluster.

The protein resides in the cytoplasm. It catalyses the reaction L-aspartate(89)-[ribosomal protein uS12]-hydrogen + (sulfur carrier)-SH + AH2 + 2 S-adenosyl-L-methionine = 3-methylsulfanyl-L-aspartate(89)-[ribosomal protein uS12]-hydrogen + (sulfur carrier)-H + 5'-deoxyadenosine + L-methionine + A + S-adenosyl-L-homocysteine + 2 H(+). Catalyzes the methylthiolation of an aspartic acid residue of ribosomal protein uS12. This Phocaeicola vulgatus (strain ATCC 8482 / DSM 1447 / JCM 5826 / CCUG 4940 / NBRC 14291 / NCTC 11154) (Bacteroides vulgatus) protein is Ribosomal protein uS12 methylthiotransferase RimO.